Reading from the N-terminus, the 390-residue chain is GTPase Obg (390 aa).

The region spanning 1 to 159 is the Obg domain; the sequence is MKFVDEASIL…RELLLELMLL (159 aa). The interval 127–147 is disordered; sequence NTRFKSSVNRTPRQKTNGTPG. The span at 129–145 shows a compositional bias: polar residues; it reads RFKSSVNRTPRQKTNGT. An OBG-type G domain is found at 160–333; it reads ADVGMLGMPN…LCWDVMTFII (174 aa). GTP is bound by residues 166–173, 191–195, 213–216, 283–286, and 314–316; these read GMPNAGKS, FTTLV, DIPG, NKID, and SAA. Serine 173 and threonine 193 together coordinate Mg(2+).

The protein belongs to the TRAFAC class OBG-HflX-like GTPase superfamily. OBG GTPase family. Monomer. Requires Mg(2+) as cofactor.

Its subcellular location is the cytoplasm. In terms of biological role, an essential GTPase which binds GTP, GDP and possibly (p)ppGpp with moderate affinity, with high nucleotide exchange rates and a fairly low GTP hydrolysis rate. Plays a role in control of the cell cycle, stress response, ribosome biogenesis and in those bacteria that undergo differentiation, in morphogenesis control. The chain is GTPase Obg from Escherichia coli (strain K12 / DH10B).